We begin with the raw amino-acid sequence, 875 residues long: Cytosolic phospholipase A2 epsilon (875 aa).

The interval 16–70 is disordered; that stretch reads THASEGHHGLGTSMLVPKNPQGEEDSKLGRNCSGFEDAQDPQTAVPSSPLLSMAS. The C2 domain maps to 60 to 183; that stretch reads VPSSPLLSMA…CLRNKTHVKF (124 aa). The span at 61–70 shows a compositional bias: low complexity; the sequence is PSSPLLSMAS. Ca(2+) contacts are provided by Asp-97, Asp-103, Asp-153, Asp-155, and Asp-161. The PLA2c domain occupies 332–875; that stretch reads PCSDTLDVRL…KKRMRSQCPS (544 aa). Ser-420 serves as the catalytic Nucleophile. Catalysis depends on Asp-708, which acts as the Proton acceptor. Ser-808 bears the Phosphoserine mark. The segment at 865 to 875 is required for localization at membrane structures; that stretch reads EKKRMRSQCPS.

The cofactor is Ca(2+). In terms of tissue distribution, predominantly expressed in brain, heart, skeletal muscle, testis and thyroid. Expressed in neurons but not astrocytes or microglia. Expressed at lower level in stomach.

The protein localises to the cytoplasm. Its subcellular location is the cytosol. The protein resides in the early endosome membrane. It localises to the lysosome membrane. It is found in the cell membrane. The catalysed reaction is a 1,2-diacyl-sn-glycero-3-phosphoethanolamine + a 1,2-diacyl-sn-glycero-3-phosphocholine = an N-acyl-1,2-diacyl-sn-glycero-3-phosphoethanolamine + a 2-acyl-sn-glycero-3-phosphocholine + H(+). It carries out the reaction 1-hexadecanoyl-2-octadecanoyl-sn-glycero-3-phosphocholine + 1,2-di-(9Z-octadecenoyl)-sn-glycero-3-phosphoethanolamine = 2-octadecanoyl-sn-glycero-3-phosphocholine + N-hexadecanoyl-1,2-di-(9Z-octadecenoyl)-sn-glycero-3-phosphoethanolamine + H(+). The enzyme catalyses 1-octadecanoyl-2-hexadecanoyl-sn-glycero-3-phosphocholine + 1,2-di-(9Z-octadecenoyl)-sn-glycero-3-phosphoethanolamine = N-octadecanoyl-1,2-di-(9Z-octadecenoyl)-sn-glycero-3-phosphoethanolamine + 2-hexadecanoyl-sn-glycero-3-phosphocholine + H(+). It catalyses the reaction 1,2-di-(9Z-octadecenoyl)-sn-glycero-3-phosphoethanolamine + 1,2-dihexadecanoyl-sn-glycero-3-phosphocholine = N-hexadecanoyl-1,2-di-(9Z-octadecenoyl)-sn-glycero-3-phosphoethanolamine + 2-hexadecanoyl-sn-glycero-3-phosphocholine + H(+). The catalysed reaction is 1,2-di-(5Z,8Z,11Z,14Z-eicosatetraenoyl)-sn-glycero-3-phosphocholine + 1,2-di-(9Z-octadecenoyl)-sn-glycero-3-phosphoethanolamine = N-(5Z,8Z,11Z,14Z-eicosatetraenoyl)-1,2-di-(9Z-octadecenoyl)-sn-glycero-3-phosphoethanolamine + 2-(5Z,8Z,11Z,14Z)-eicosatetraenoyl-sn-glycero-3-phosphocholine + H(+). It carries out the reaction 2 1,2-di-(9Z-octadecenoyl)-sn-glycero-3-phosphoethanolamine = N,1,2-tri-(9Z-octadecenoyl)-sn-glycero-3-phosphoethanolamine + 2-(9Z-octadecenoyl)-sn-glycero-3-phosphoethanolamine + H(+). The enzyme catalyses a 1,2-diacyl-sn-glycero-3-phosphocholine + H2O = a 1-acyl-sn-glycero-3-phosphocholine + a fatty acid + H(+). It catalyses the reaction 1-(1Z-octadecenyl)-2-(9Z-octadecenoyl)-sn-glycero-3-phosphoethanolamine + 1,2-dihexadecanoyl-sn-glycero-3-phosphocholine = 1-O-(1Z-octadecenoyl)-2-(9Z-octadecenoyl)-sn-glycero-3-phospho-N-hexadecanoyl-ethanolamine + 2-hexadecanoyl-sn-glycero-3-phosphocholine + H(+). The catalysed reaction is 1-hexadecanoyl-2-(5Z,8Z,11Z,14Z-eicosatetraenoyl)-sn-glycero-3-phosphocholine + H2O = 1-hexadecanoyl-sn-glycero-3-phosphocholine + (5Z,8Z,11Z,14Z)-eicosatetraenoate + H(+). It carries out the reaction 1-hexadecanoyl-sn-glycero-3-phosphocholine + H2O = sn-glycerol 3-phosphocholine + hexadecanoate + H(+). Stimulated by cytosolic Ca(2+). Stimulated by anionic phospholipids such as phosphatidylserine. In terms of biological role, calcium-dependent N-acyltransferase involved in the biosynthesis of N-acyl ethanolamines (NAEs) in the brain. Transfers the sn-1 fatty acyl chain of phosphatidylcholine (fatty acyl donor) to the amine group of phosphatidylethanolamine (fatty acyl acceptor) to generate N-acyl phosphatidylethanolamine (NAPE). Similarly can use plasmenylethanolamine as a fatty acyl acceptor to form N-acyl plasmenylethanolamine (N-Acyl-PlsEt). Both NAPE and N-Acyl-PlsEt can serve as precursors of bioactive NAEs like N-arachidonoyl phosphatidylethanolamine also called anandamide. Has weak phospholipase A2 and lysophospholipase activities. Regulates intracellular membrane trafficking that requires modulation of membrane curvature as it occurs by enrichment in lysophospholipids. Promotes tubule formation involved in clathrin-independent endocytotic trafficking and cargo recycling. The chain is Cytosolic phospholipase A2 epsilon (Pla2g4e) from Mus musculus (Mouse).